A 649-amino-acid chain; its full sequence is UvrABC system protein B (649 aa).

A Helicase ATP-binding domain is found at 25-178 (EHYKDGIKEQ…EDILKELVKM (154 aa)). Residue 38–45 (GVTGSGKT) participates in ATP binding. Residues 91–114 (YYDYYQPEAYVAQTDTFIDKESAI) carry the Beta-hairpin motif. The Helicase C-terminal domain occupies 428 to 594 (QVDDLLGEIR…SVVRKLKDKK (167 aa)). The region spanning 614–649 (DEIIKELEKEMKQAAKDLNFEKAAKLRDRIMELKEE) is the UVR domain.

The protein belongs to the UvrB family. In terms of assembly, forms a heterotetramer with UvrA during the search for lesions. Interacts with UvrC in an incision complex.

It localises to the cytoplasm. Functionally, the UvrABC repair system catalyzes the recognition and processing of DNA lesions. A damage recognition complex composed of 2 UvrA and 2 UvrB subunits scans DNA for abnormalities. Upon binding of the UvrA(2)B(2) complex to a putative damaged site, the DNA wraps around one UvrB monomer. DNA wrap is dependent on ATP binding by UvrB and probably causes local melting of the DNA helix, facilitating insertion of UvrB beta-hairpin between the DNA strands. Then UvrB probes one DNA strand for the presence of a lesion. If a lesion is found the UvrA subunits dissociate and the UvrB-DNA preincision complex is formed. This complex is subsequently bound by UvrC and the second UvrB is released. If no lesion is found, the DNA wraps around the other UvrB subunit that will check the other stand for damage. This chain is UvrABC system protein B, found in Methanosphaera stadtmanae (strain ATCC 43021 / DSM 3091 / JCM 11832 / MCB-3).